The following is a 90-amino-acid chain: Small ribosomal subunit protein bS16 (90 aa).

It belongs to the bacterial ribosomal protein bS16 family.

This is Small ribosomal subunit protein bS16 from Clostridioides difficile (strain 630) (Peptoclostridium difficile).